Consider the following 622-residue polypeptide: Glutamyl-tRNA(Gln) amidotransferase subunit E (622 aa).

It belongs to the GatB/GatE family. GatE subfamily. Heterodimer of GatD and GatE.

The enzyme catalyses L-glutamyl-tRNA(Gln) + L-glutamine + ATP + H2O = L-glutaminyl-tRNA(Gln) + L-glutamate + ADP + phosphate + H(+). Allows the formation of correctly charged Gln-tRNA(Gln) through the transamidation of misacylated Glu-tRNA(Gln) in organisms which lack glutaminyl-tRNA synthetase. The reaction takes place in the presence of glutamine and ATP through an activated gamma-phospho-Glu-tRNA(Gln). The GatDE system is specific for glutamate and does not act on aspartate. This is Glutamyl-tRNA(Gln) amidotransferase subunit E from Halobacterium salinarum (strain ATCC 29341 / DSM 671 / R1).